A 503-amino-acid chain; its full sequence is Glutamate--tRNA ligase (503 aa).

The 'HIGH' region signature appears at 15 to 25; that stretch reads PSPTGYLHVGG. Positions 262–266 match the 'KMSKS' region motif; that stretch reads KLSKR. Lys265 contacts ATP.

This sequence belongs to the class-I aminoacyl-tRNA synthetase family. Glutamate--tRNA ligase type 1 subfamily. Monomer.

The protein resides in the cytoplasm. It carries out the reaction tRNA(Glu) + L-glutamate + ATP = L-glutamyl-tRNA(Glu) + AMP + diphosphate. Catalyzes the attachment of glutamate to tRNA(Glu) in a two-step reaction: glutamate is first activated by ATP to form Glu-AMP and then transferred to the acceptor end of tRNA(Glu). The sequence is that of Glutamate--tRNA ligase from Prosthecochloris aestuarii (strain DSM 271 / SK 413).